The chain runs to 245 residues: 5-oxoprolinase subunit A (245 aa).

This sequence belongs to the LamB/PxpA family. In terms of assembly, forms a complex composed of PxpA, PxpB and PxpC.

It catalyses the reaction 5-oxo-L-proline + ATP + 2 H2O = L-glutamate + ADP + phosphate + H(+). In terms of biological role, catalyzes the cleavage of 5-oxoproline to form L-glutamate coupled to the hydrolysis of ATP to ADP and inorganic phosphate. This is 5-oxoprolinase subunit A from Serratia proteamaculans (strain 568).